The following is a 728-amino-acid chain: Catalase B (728 aa).

Active-site residues include His-107 and Asn-180. Tyr-394 provides a ligand contact to heme.

It belongs to the catalase family. Heme is required as a cofactor.

It is found in the secreted. It carries out the reaction 2 H2O2 = O2 + 2 H2O. In terms of biological role, occurs in almost all aerobically respiring organisms and serves to protect cells from the toxic effects of hydrogen peroxide. The chain is Catalase B (CATB) from Ajellomyces capsulatus (Darling's disease fungus).